The primary structure comprises 265 residues: Small ribosomal subunit protein uS2 (265 aa).

The protein belongs to the universal ribosomal protein uS2 family.

This Aliarcobacter butzleri (strain RM4018) (Arcobacter butzleri) protein is Small ribosomal subunit protein uS2.